We begin with the raw amino-acid sequence, 171 residues long: Siroheme decarboxylase NirH subunit (171 aa).

This sequence belongs to the Ahb/Nir family. Probably forms a complex composed of NirD, NirL, NirG and NirH. All proteins are required for the total conversion of siroheme to didecarboxysiroheme.

It carries out the reaction siroheme + 2 H(+) = 12,18-didecarboxysiroheme + 2 CO2. Its pathway is porphyrin-containing compound metabolism. Involved in heme d1 biosynthesis. Catalyzes the decarboxylation of siroheme into didecarboxysiroheme. In Pseudomonas aeruginosa (strain ATCC 15692 / DSM 22644 / CIP 104116 / JCM 14847 / LMG 12228 / 1C / PRS 101 / PAO1), this protein is Siroheme decarboxylase NirH subunit.